Reading from the N-terminus, the 276-residue chain is 2-dehydro-3-deoxyphosphooctonate aldolase (276 aa).

Belongs to the KdsA family.

It is found in the cytoplasm. It catalyses the reaction D-arabinose 5-phosphate + phosphoenolpyruvate + H2O = 3-deoxy-alpha-D-manno-2-octulosonate-8-phosphate + phosphate. Its pathway is carbohydrate biosynthesis; 3-deoxy-D-manno-octulosonate biosynthesis; 3-deoxy-D-manno-octulosonate from D-ribulose 5-phosphate: step 2/3. It participates in bacterial outer membrane biogenesis; lipopolysaccharide biosynthesis. The chain is 2-dehydro-3-deoxyphosphooctonate aldolase from Chelativorans sp. (strain BNC1).